Here is a 77-residue protein sequence, read N- to C-terminus: Small ribosomal subunit protein bS21 (77 aa).

Positions 55 to 77 are disordered; the sequence is RKLARKRAQREGLMSNGRISALR.

The protein belongs to the bacterial ribosomal protein bS21 family.

The polypeptide is Small ribosomal subunit protein bS21 (Bartonella quintana (strain Toulouse) (Rochalimaea quintana)).